The following is a 580-amino-acid chain: MNLFTEIRTLVTAELGAMTEAGDLPAGLDLSAVAVEPPRDPAHGDMSTNAAMVLAKPSGKPPRAIAEALATRLAADPRISSAEVAGPGFLNLRLRPAVWQGMVATILKAGDTYGRSTIGAGQKVNVEFVSANPTGPMHVGHVRGAVVGDALARLLAYAGWNVTREYYINDGGAQVDVLARSAFERYREAHGLEPEIREGLYPGDYLIPVGEALKAKYGDSLLDKGEQHWLTEVREFATEMMMQMIREDLAALGVEMDVYSSEKALYGTGKIEAALDRLKEMDLIYEGVLEPPKGKTPEDWEPREQTLFRSTAHGDDVDRPVKKSDGSWTYFAPDIAYHYDKVTRGFDQLIDIFGADHGGYVKRMKAAVAALSAGRVPLDIKLIQLVKLWKNGEPFKMSKRAGTYVTLRDVVEQVGTDVTRFVMLTRKNDATLDFDFDKVLEQSKENPVFYVQYANARINSVLRKAREQGMDVSDATLATADLDRLDHPAEIALIAKLAEWPRLVEIAARTNEPHRVAFYLHELASELHGLWNRGNDEAGLRFLQEDPVVSQAKIALARAVGVVICAGLGILGVTPVEEMR.

The 'HIGH' region motif lies at 131–141; it reads ANPTGPMHVGH.

The protein belongs to the class-I aminoacyl-tRNA synthetase family. As to quaternary structure, monomer.

The protein localises to the cytoplasm. The enzyme catalyses tRNA(Arg) + L-arginine + ATP = L-arginyl-tRNA(Arg) + AMP + diphosphate. In Cereibacter sphaeroides (strain KD131 / KCTC 12085) (Rhodobacter sphaeroides), this protein is Arginine--tRNA ligase.